A 142-amino-acid chain; its full sequence is MVLSAADKSNVKAAWGKVGGNAGAYGAEALERMFLSFPTTKTYFPHFDLSHGSAQVKGHGEKVAAALTKAVGHLDDLPGTLSDLSDLHAHKLRVDPVNFKLLSHTLLVTLACHLPNDFTPAVHASLDKFLASVGTVLTSKYR.

The Globin domain maps to 2 to 142 (VLSAADKSNV…VGTVLTSKYR (141 aa)). S4 carries the phosphoserine modification. N6-succinyllysine is present on residues K8 and K12. N6-acetyllysine; alternate is present on K17. N6-succinyllysine; alternate is present on K17. Y25 carries the post-translational modification Phosphotyrosine. S36 is subject to Phosphoserine. An N6-succinyllysine modification is found at K41. S50 is subject to Phosphoserine. H59 is a binding site for O2. H88 contacts heme b. Position 103 is a phosphoserine (S103). T109 carries the phosphothreonine modification. Phosphoserine occurs at positions 125 and 132. Phosphothreonine occurs at positions 135 and 138. S139 carries the post-translational modification Phosphoserine.

It belongs to the globin family. Heterotetramer of two alpha chains and two beta chains. As to expression, red blood cells.

Involved in oxygen transport from the lung to the various peripheral tissues. Functionally, hemopressin acts as an antagonist peptide of the cannabinoid receptor CNR1. Hemopressin-binding efficiently blocks cannabinoid receptor CNR1 and subsequent signaling. The polypeptide is Hemoglobin subunit alpha (HBA) (Pantholops hodgsonii (Chiru)).